We begin with the raw amino-acid sequence, 363 residues long: TBC1 domain family member whacked (363 aa).

Positions 77 to 265 (GIPKSVRPKA…RVWDCFLAEG (189 aa)) constitute a Rab-GAP TBC domain. The disordered stretch occupies residues 335–363 (KARRAKQKAQQEAESSGSGNGHRRNMPTL).

It is found in the apical cell membrane. The protein localises to the cytoplasmic vesicle. The protein resides in the cell projection. It localises to the filopodium. Its function is as follows. Essential for ensuring the polarized growth of tracheal seamless tubes. During seamless tube morphogenesis, likely to act as a GTPase-activating protein (GAP) for Rab35 to regulate vesicle trafficking from the recycling endosomes to the lumenal apical membrane to ensure the polarized dynein motor complex-dependent growth of seamless tubes along the proximodistal axis in tracheal terminal cells. When the terminal branch lumen is growing, Rab35-GTP is active and likely directs the transport of apical membrane vesicles from the soma to the distal tip of elongating terminal cell branches thus providing a continuous supply of apical membrane components as the lumen grows. Whereas when Rab35-GDP is inactivated, presumably by this GAP, apical membrane vesicles are transported to a central location adjacent to the terminal cell nucleus. This Drosophila melanogaster (Fruit fly) protein is TBC1 domain family member whacked.